Consider the following 317-residue polypeptide: Acetyl-coenzyme A carboxylase carboxyl transferase subunit alpha (317 aa).

The CoA carboxyltransferase C-terminal domain maps to 40–293 (LEKRSADALK…GDIIAASLRS (254 aa)).

It belongs to the AccA family. In terms of assembly, acetyl-CoA carboxylase is a heterohexamer composed of biotin carboxyl carrier protein (AccB), biotin carboxylase (AccC) and two subunits each of ACCase subunit alpha (AccA) and ACCase subunit beta (AccD).

It is found in the cytoplasm. It carries out the reaction N(6)-carboxybiotinyl-L-lysyl-[protein] + acetyl-CoA = N(6)-biotinyl-L-lysyl-[protein] + malonyl-CoA. Its pathway is lipid metabolism; malonyl-CoA biosynthesis; malonyl-CoA from acetyl-CoA: step 1/1. Its function is as follows. Component of the acetyl coenzyme A carboxylase (ACC) complex. First, biotin carboxylase catalyzes the carboxylation of biotin on its carrier protein (BCCP) and then the CO(2) group is transferred by the carboxyltransferase to acetyl-CoA to form malonyl-CoA. The protein is Acetyl-coenzyme A carboxylase carboxyl transferase subunit alpha of Brucella canis (strain ATCC 23365 / NCTC 10854 / RM-666).